We begin with the raw amino-acid sequence, 225 residues long: MSHTEVKLKIPFGNKLLDAVCLVPNKNIAYGIILTHGASGDMNLPHLMSLASHLASHGFFCLRFTCKGLNIVHRIKAYKAVLNYLKTSGEYKLAGVFLGGRSMGSRAAASVMCHTEPDDADDFVRGLICISYPLHHPKQQHKLRDEDLFRIKDPVLFVSGSADEMCEKNLLEKVAQKMQAPSKIHWIEKANHSMAVKGRSTNDVFKEINTQILFWIQEITEMDKK.

This is Testis-expressed protein 30 (Tex30) from Mus musculus (Mouse).